A 118-amino-acid chain; its full sequence is uncharacterized protein (118 aa).

Belongs to the Lactobacillus delbrueckii bacteriophages ORF5 protein family.

This is an uncharacterized protein from Lactobacillus delbrueckii (Lactococcus delbrueckii bacteriophage LL-H).